Reading from the N-terminus, the 159-residue chain is Probable deoxyuridine 5'-triphosphate nucleotidohydrolase (159 aa).

It belongs to the dCTP deaminase family. Archaeal dUTPase subfamily.

The enzyme catalyses dUTP + H2O = dUMP + diphosphate + H(+). Its pathway is pyrimidine metabolism; dUMP biosynthesis; dUMP from dCTP (dUTP route): step 2/2. In terms of biological role, this enzyme is involved in nucleotide metabolism: it produces dUMP, the immediate precursor of thymidine nucleotides and it decreases the intracellular concentration of dUTP so that uracil cannot be incorporated into DNA. This is Probable deoxyuridine 5'-triphosphate nucleotidohydrolase from Aeropyrum pernix (strain ATCC 700893 / DSM 11879 / JCM 9820 / NBRC 100138 / K1).